The following is a 31-amino-acid chain: Conotoxin pc6b (31 aa).

3 disulfide bridges follow: cysteine 2–cysteine 20, cysteine 9–cysteine 25, and cysteine 19–cysteine 29.

It belongs to the conotoxin O1 superfamily. As to expression, expressed by the venom duct.

It is found in the secreted. The protein is Conotoxin pc6b of Conus pictus (Cone snail).